A 184-amino-acid chain; its full sequence is uncharacterized protein (184 aa).

The tract at residues 130 to 149 (DKDDDKKKKKKDDKKDDPCN) is disordered.

The protein resides in the virion. This is an uncharacterized protein from Acanthamoeba polyphaga (Amoeba).